Reading from the N-terminus, the 944-residue chain is Proline and serine-rich protein 1 (944 aa).

N-acetylmethionine is present on Met1. 4 disordered regions span residues Pro233–Thr285, Pro369–Phe396, Lys608–Leu633, and Glu912–Gln944. The span at Leu248–Asn274 shows a compositional bias: polar residues. The span at Pro275 to Thr285 shows a compositional bias: low complexity. Residues Phe932 to Gln944 show a composition bias toward polar residues.

Interacts with TET2 and OGT; this interaction mediates TET2 O-GlcNAcylation and stability by promoting the interaction between OGT and TET2. Interacts with KDM6A. Interacts with TET1. Glycosylated. Interaction with OGT leads to GlcNAcylation.

In terms of biological role, mediates OGT interaction with and O-GlcNAcylation of TET2 to control TET2 stabilization at enhancers and CpG islands (CGIs). The polypeptide is Proline and serine-rich protein 1 (Homo sapiens (Human)).